The chain runs to 466 residues: Gamma-aminobutyric acid receptor subunit gamma-2 (466 aa).

The first 38 residues, 1-38 (MSSPNTWSTGSTVYSPVFSQKMTLWILLLLSLYPGFTS), serve as a signal peptide directing secretion. Topologically, residues 39–274 (QKSDDDYEDY…FDLSRRMGYF (236 aa)) are extracellular. N-linked (GlcNAc...) asparagine glycans are attached at residues Asn51 and Asn128. A disulfide bond links Cys189 and Cys203. An N-linked (GlcNAc...) asparagine glycan is attached at Asn246. The helical transmembrane segment at 275 to 295 (TIQTYIPCTLIVVLSWVSFWI) threads the bilayer. Topologically, residues 296–301 (NKDAVP) are cytoplasmic. The helical transmembrane segment at 302-321 (ARTSLGITTVLTMTTLSTIA) threads the bilayer. Residues 322–333 (RKSLPKVSYVTA) are Extracellular-facing. Residues 334-358 (MDLFVSVCFIFVFSALVEYGTLHYF) form a helical membrane-spanning segment. Residues 359–442 (VSNRKPSKDK…IHIRIAKMDS (84 aa)) lie on the Cytoplasmic side of the membrane. Residues 443–463 (YARIFFPTAFCLFNLVYWVSY) traverse the membrane as a helical segment. The Extracellular segment spans residues 464 to 466 (LYL).

It belongs to the ligand-gated ion channel (TC 1.A.9) family. Gamma-aminobutyric acid receptor (TC 1.A.9.5) subfamily. GABRG2 sub-subfamily. In terms of assembly, heteropentamer, formed by a combination of alpha (GABRA1-6), beta (GABRB1-3), gamma (GABRG1-3), delta (GABRD), epsilon (GABRE), rho (GABRR1-3), pi (GABRP) and theta (GABRQ) chains, each subunit exhibiting distinct physiological and pharmacological properties. Interacts with GABARAP. Interacts with KIF21B. Identified in a complex of 720 kDa composed of LHFPL4, NLGN2, GABRA1, GABRB2, GABRG2 and GABRB3. Interacts with LHFPL4. Interacts with SHISA7; interaction leads to the regulation of GABA(A) receptor trafficking, channel deactivation kinetics and pharmacology. Palmitoylated by ZDHHC3/GODZ; required for the accumulation of GABA(A) receptors at the postsynaptic membrane of inhibitory GABAergic synapses. In terms of processing, glycosylated. As to expression, expressed in brain (at protein level). Expressed in lungs, in alveolar epithelium.

Its subcellular location is the postsynaptic cell membrane. It localises to the cell membrane. The protein localises to the cell projection. It is found in the dendrite. The protein resides in the cytoplasmic vesicle membrane. It catalyses the reaction chloride(in) = chloride(out). Its activity is regulated as follows. Allosterically activated by benzodiazepines. Activated by pentobarbital. Inhibited by the antagonist bicuculline. Inhibited by zinc ions. Potentiated by histamine. Functionally, gamma subunit of the heteropentameric ligand-gated chloride channel gated by gamma-aminobutyric acid (GABA), a major inhibitory neurotransmitter in the brain. GABA-gated chloride channels, also named GABA(A) receptors (GABAAR), consist of five subunits arranged around a central pore and contain GABA active binding site(s) located at the alpha and beta subunit interface(s). When activated by GABA, GABAARs selectively allow the flow of chloride anions across the cell membrane down their electrochemical gradient. Gamma-2/GABRG2-containing GABAARs are found at both synaptic and extrasynaptic sites. Chloride influx into the postsynaptic neuron following GABAAR opening decreases the neuron ability to generate a new action potential, thereby reducing nerve transmission. GABAARs containing alpha-1 and beta-2 or -3 subunits exhibit synaptogenic activity; the gamma-2 subunit being necessary but not sufficient to induce rapid synaptic contacts formation. Extrasynaptic gamma-2-containing receptors contribute to the tonic GABAergic inhibition. GABAARs function also as histamine receptor where histamine binds at the interface of two neighboring beta subunits and potentiates GABA response in a gamma-2 subunit-controlled manner. The polypeptide is Gamma-aminobutyric acid receptor subunit gamma-2 (Rattus norvegicus (Rat)).